Consider the following 444-residue polypeptide: Multidrug resistance protein MdtA (444 aa).

The signal sequence occupies residues 1-20; the sequence is MKSQSKRTSRLFVFVGGVVA. The segment covering 37–52 has biased composition (polar residues); it reads NNTSGAQQSARGQDTS. Disordered stretches follow at residues 37–60 and 398–444; these read NNTSGAQQSARGQDTSHGGRRNTP and TPRS…AEKS. The segment covering 406-419 has biased composition (low complexity); sequence ANPASAEKAAAEAE. Polar residues predominate over residues 435–444; sequence ARSTTAAEKS.

The protein belongs to the membrane fusion protein (MFP) (TC 8.A.1) family. In terms of assembly, part of a tripartite efflux system composed of MdtA, MdtB and MdtC.

It is found in the cell inner membrane. The sequence is that of Multidrug resistance protein MdtA from Yersinia pseudotuberculosis serotype O:1b (strain IP 31758).